A 216-amino-acid chain; its full sequence is Orotate phosphoribosyltransferase (216 aa).

Position 30 (K30) interacts with 5-phospho-alpha-D-ribose 1-diphosphate. An orotate-binding site is contributed by 38-39; that stretch reads FF. 5-phospho-alpha-D-ribose 1-diphosphate is bound by residues 75-76, R102, K103, K106, H108, and 128-136; these read YK and DDVITAGTA. Orotate contacts are provided by T132 and R160.

It belongs to the purine/pyrimidine phosphoribosyltransferase family. PyrE subfamily. In terms of assembly, homodimer. Mg(2+) is required as a cofactor.

It catalyses the reaction orotidine 5'-phosphate + diphosphate = orotate + 5-phospho-alpha-D-ribose 1-diphosphate. The protein operates within pyrimidine metabolism; UMP biosynthesis via de novo pathway; UMP from orotate: step 1/2. Its function is as follows. Catalyzes the transfer of a ribosyl phosphate group from 5-phosphoribose 1-diphosphate to orotate, leading to the formation of orotidine monophosphate (OMP). This is Orotate phosphoribosyltransferase from Acinetobacter baumannii (strain ATCC 17978 / DSM 105126 / CIP 53.77 / LMG 1025 / NCDC KC755 / 5377).